The primary structure comprises 196 residues: Nucleoid occlusion factor SlmA (196 aa).

Positions 7–68 (TNRREEILQA…GLIEFIEEAL (62 aa)) constitute an HTH tetR-type domain. Positions 31 to 50 (TTAKLAKQVGVSEAALYRHF) form a DNA-binding region, H-T-H motif. Residues 110–142 (HALMFENERLRDRINQLFERIETQLRQILRERK) adopt a coiled-coil conformation.

It belongs to the nucleoid occlusion factor SlmA family. In terms of assembly, homodimer. Interacts with FtsZ.

Its subcellular location is the cytoplasm. The protein resides in the nucleoid. Its function is as follows. Required for nucleoid occlusion (NO) phenomenon, which prevents Z-ring formation and cell division over the nucleoid. Acts as a DNA-associated cell division inhibitor that binds simultaneously chromosomal DNA and FtsZ, and disrupts the assembly of FtsZ polymers. SlmA-DNA-binding sequences (SBS) are dispersed on non-Ter regions of the chromosome, preventing FtsZ polymerization at these regions. This is Nucleoid occlusion factor SlmA from Vibrio campbellii (strain ATCC BAA-1116).